The sequence spans 1013 residues: Ephrin type-A receptor 5 (1013 aa).

Positions Met1–Ala31 are cleaved as a signal peptide. Topologically, residues Ser32 to Pro549 are extracellular. The Eph LBD domain maps to Glu36–Arg214. Residues Asn240, Asn275, Asn345, Asn399, Asn412, and Asn437 are each glycosylated (N-linked (GlcNAc...) asparagine). Fibronectin type-III domains lie at Pro333 to Ala443 and Ala444 to Val538. Residues Ile550–Leu570 traverse the membrane as a helical segment. The Cytoplasmic segment spans residues Ser571–Leu1013. Tyr626 and Tyr632 each carry phosphotyrosine; by autocatalysis. One can recognise a Protein kinase domain in the interval Ile651 to Ile912. Residues Ile657–Val665 and Lys683 each bind ATP. Asp776 serves as the catalytic Proton acceptor. A phosphotyrosine; by autocatalysis mark is found at Tyr809 and Tyr958. The region spanning Gly941–Leu1013 is the SAM domain. The PDZ-binding motif lies at Val1011–Leu1013.

It belongs to the protein kinase superfamily. Tyr protein kinase family. Ephrin receptor subfamily. Heterotetramer upon binding of the ligand. The heterotetramer is composed of an ephrin dimer and a receptor dimer. Oligomerization is probably required to induce biological responses. In terms of processing, phosphorylated. Phosphorylation is stimulated by the ligand EFNA5. Detected in the 10-day embryonic brain, weaker expression in the rest of the 10-day embryo. Undetected in adult tissues.

It localises to the cell membrane. The protein localises to the cell projection. It is found in the axon. Its subcellular location is the dendrite. The enzyme catalyses L-tyrosyl-[protein] + ATP = O-phospho-L-tyrosyl-[protein] + ADP + H(+). In terms of biological role, receptor tyrosine kinase which binds promiscuously GPI-anchored ephrin-A family ligands residing on adjacent cells, leading to contact-dependent bidirectional signaling into neighboring cells. The signaling pathway downstream of the receptor is referred to as forward signaling while the signaling pathway downstream of the ephrin ligand is referred to as reverse signaling. Among GPI-anchored ephrin-A ligands, EFNA5 most probably constitutes the cognate/functional ligand for EPHA5. Functions as an axon guidance molecule during development and may be involved in the development of the retinotectal, entorhino-hippocampal and hippocamposeptal pathways. Together with EFNA5 plays also a role in synaptic plasticity in adult brain through regulation of synaptogenesis. The protein is Ephrin type-A receptor 5 (EPHA5) of Gallus gallus (Chicken).